A 238-amino-acid chain; its full sequence is Ribonuclease PH (238 aa).

Phosphate is bound by residues Arg86 and 124-126 (GTR).

Belongs to the RNase PH family. In terms of assembly, homohexameric ring arranged as a trimer of dimers.

The catalysed reaction is tRNA(n+1) + phosphate = tRNA(n) + a ribonucleoside 5'-diphosphate. Phosphorolytic 3'-5' exoribonuclease that plays an important role in tRNA 3'-end maturation. Removes nucleotide residues following the 3'-CCA terminus of tRNAs; can also add nucleotides to the ends of RNA molecules by using nucleoside diphosphates as substrates, but this may not be physiologically important. Probably plays a role in initiation of 16S rRNA degradation (leading to ribosome degradation) during starvation. In Salmonella choleraesuis (strain SC-B67), this protein is Ribonuclease PH.